Consider the following 425-residue polypeptide: NAC transcription factor ONAC010 (425 aa).

Polar residues predominate over residues 1 to 10 (MESPDSSSGS). Positions 1–34 (MESPDSSSGSAPPRVLRRQQQQPGSAPELPPGFR) are disordered. Residues 12-23 (PPRVLRRQQQQP) show a composition bias toward low complexity. One can recognise an NAC domain in the interval 29–200 (LPPGFRFHPT…DWVLCRIYKK (172 aa)). A DNA-binding region spans residues 129–206 (VGVKKALVFY…IYKKTNKAGA (78 aa)).

Its subcellular location is the nucleus. In terms of biological role, transcription factor of the NAC family associated with male fertility. The polypeptide is NAC transcription factor ONAC010 (ONAC010) (Oryza sativa subsp. indica (Rice)).